Consider the following 263-residue polypeptide: 4-hydroxy-tetrahydrodipicolinate reductase (263 aa).

NAD(+) contacts are provided by residues 7–12, 96–98, and 122–125; these read GFKGRM, GTT, and APNF. His152 (proton donor/acceptor) is an active-site residue. His153 serves as a coordination point for (S)-2,3,4,5-tetrahydrodipicolinate. Residue Lys156 is the Proton donor of the active site. 162-163 is a (S)-2,3,4,5-tetrahydrodipicolinate binding site; it reads GT.

This sequence belongs to the DapB family.

Its subcellular location is the cytoplasm. It catalyses the reaction (S)-2,3,4,5-tetrahydrodipicolinate + NAD(+) + H2O = (2S,4S)-4-hydroxy-2,3,4,5-tetrahydrodipicolinate + NADH + H(+). The catalysed reaction is (S)-2,3,4,5-tetrahydrodipicolinate + NADP(+) + H2O = (2S,4S)-4-hydroxy-2,3,4,5-tetrahydrodipicolinate + NADPH + H(+). It participates in amino-acid biosynthesis; L-lysine biosynthesis via DAP pathway; (S)-tetrahydrodipicolinate from L-aspartate: step 4/4. Functionally, catalyzes the conversion of 4-hydroxy-tetrahydrodipicolinate (HTPA) to tetrahydrodipicolinate. This Listeria innocua serovar 6a (strain ATCC BAA-680 / CLIP 11262) protein is 4-hydroxy-tetrahydrodipicolinate reductase.